We begin with the raw amino-acid sequence, 955 residues long: Leucine-rich repeat-containing G-protein coupled receptor 4 (955 aa).

The signal sequence occupies residues 1 to 21 (MGCPGWPLALFALLLASCSGG). Topologically, residues 22–547 (PSGVSSPAPC…LLGSWMIRLT (526 aa)) are extracellular. One can recognise an LRRNT domain in the interval 26-59 (SSPAPCPAPCACDLDGGADCSGKGLVTVPDGLSV). 2 disulfide bridges follow: Cys31-Cys37 and Cys35-Cys45. 10 LRR repeats span residues 57-81 (LSVF…AFKG), 83-105 (PYLE…ALSG), 106-129 (LKEL…SLKG), 131-153 (VSLQ…SFEG), 155-177 (VQLR…PLSN), 178-201 (LPSL…AFSN), 203-225 (SSLV…CFHG), 226-249 (LDNL…IRSL), 250-272 (PNLK…AFVK), and 274-296 (PLLR…AFQN). Asn201 carries N-linked (GlcNAc...) asparagine glycosylation. Asn296 and Asn316 each carry an N-linked (GlcNAc...) asparagine glycan. LRR repeat units lie at residues 320-343 (TNNL…FCQE), 345-365 (KMLR…GFEG), 366-389 (CSSL…TFQG), 390-413 (LAAL…AFVT), and 415-437 (KALT…GLHG). Cys341 and Cys366 are oxidised to a cystine. A glycan (N-linked (GlcNAc...) asparagine) is linked at Asn384. 2 disulfide bridges follow: Cys472/Cys525 and Cys473/Cys478. Residues 548-568 (VWFIFLLALIFNVIVIVTMFA) form a helical membrane-spanning segment. Residues 569–578 (SCSQLTSSKL) are Cytoplasmic-facing. The helical transmembrane segment at 579-599 (FIGLIAVSNLFMGVYTGTLTV) threads the bilayer. Over 600 to 623 (LDTISWGQFAEFGIWWETGNGCKV) the chain is Extracellular. Cys621 and Cys696 are joined by a disulfide. Residues 624–644 (AGFLAIFSSESAIFFLMLAAI) form a helical membrane-spanning segment. The Cytoplasmic portion of the chain corresponds to 645-666 (ERSLSAKDIIKKEKHQHLRKFQ). Residues 667–687 (VASLLAVLLAAAAGCLPLFHI) traverse the membrane as a helical segment. The Extracellular segment spans residues 688–706 (GEFSSSPLCLPFPTGETPS). The helical transmembrane segment at 707–727 (LGFTVTLVLLNSLAFLIMVIT) threads the bilayer. Residues 728-759 (YTKLYCTIEKEDLSENAESSMIKHVAWLIFTN) are Cytoplasmic-facing. Residues 760 to 780 (CIFFCPVAFFSFAPLITAIYI) traverse the membrane as a helical segment. Over 781-786 (SPEIMK) the chain is Extracellular. Residues 787-807 (SVTLIFLPLPACLNPVLYVFF) traverse the membrane as a helical segment. At 808 to 955 (NPKFKEDWKL…YAYNIPRMKD (148 aa)) the chain is on the cytoplasmic side.

It belongs to the G-protein coupled receptor 1 family.

The protein resides in the cell membrane. Receptor for R-spondins that potentiates the canonical Wnt signaling pathway and is involved in the formation of various organs. Upon binding to R-spondins (RSPO1, RSPO2, RSPO3 or RSPO4), associates with phosphorylated LRP6 and frizzled receptors that are activated by extracellular Wnt receptors, triggering the canonical Wnt signaling pathway to increase expression of target genes. In contrast to classical G-protein coupled receptors, does not activate heterotrimeric G-proteins to transduce the signal. Its function as activator of the Wnt signaling pathway is required for the development of various organs, including liver, kidney, intestine, bone, reproductive tract and eye. May play a role in regulating the circadian rhythms of plasma lipids. Required for proper development of GnRH neurons (gonadotropin-releasing hormone expressing neurons) that control the release of reproductive hormones from the pituitary gland. This Xenopus tropicalis (Western clawed frog) protein is Leucine-rich repeat-containing G-protein coupled receptor 4 (lgr4).